Consider the following 222-residue polypeptide: WAP four-disulfide core domain protein 1 (222 aa).

An N-terminal signal peptide occupies residues 1–32; the sequence is MDSRMLSDQRFCRRIFAAALCVLVLLADSGCA. Positions 61–110 constitute a WAP domain; sequence HYQKNDRCPPPPQTLPDRACEVPSCRSDSECERHKRCCYNGCIYACLESV. Disulfide bonds link Cys-68–Cys-98, Cys-80–Cys-102, Cys-85–Cys-97, and Cys-91–Cys-106.

Its subcellular location is the secreted. Has growth inhibitory activity. This chain is WAP four-disulfide core domain protein 1 (WFDC1), found in Gallus gallus (Chicken).